Reading from the N-terminus, the 135-residue chain is Ribonuclease VapC9 (135 aa).

The PINc domain occupies 15–118; that stretch reads VVDTNVLMYV…LKRKAKQRGI (104 aa). The Mg(2+) site is built by Asp-17 and Asp-88.

The protein belongs to the PINc/VapC protein family. In terms of assembly, dimer. Mg(2+) is required as a cofactor.

In terms of biological role, toxic component of a type II toxin-antitoxin (TA) system. An RNase. The chain is Ribonuclease VapC9 from Archaeoglobus fulgidus (strain ATCC 49558 / DSM 4304 / JCM 9628 / NBRC 100126 / VC-16).